Consider the following 232-residue polypeptide: Proteasome subunit alpha (232 aa).

The protein belongs to the peptidase T1A family. In terms of assembly, the 20S proteasome core is composed of 14 alpha and 14 beta subunits that assemble into four stacked heptameric rings, resulting in a barrel-shaped structure. The two inner rings, each composed of seven catalytic beta subunits, are sandwiched by two outer rings, each composed of seven alpha subunits. The catalytic chamber with the active sites is on the inside of the barrel. Has a gated structure, the ends of the cylinder being occluded by the N-termini of the alpha-subunits. Is capped by the proteasome-associated ATPase, ARC.

It is found in the cytoplasm. The protein operates within protein degradation; proteasomal Pup-dependent pathway. Its activity is regulated as follows. The formation of the proteasomal ATPase ARC-20S proteasome complex, likely via the docking of the C-termini of ARC into the intersubunit pockets in the alpha-rings, may trigger opening of the gate for substrate entry. Interconversion between the open-gate and close-gate conformations leads to a dynamic regulation of the 20S proteasome proteolysis activity. Functionally, component of the proteasome core, a large protease complex with broad specificity involved in protein degradation. The sequence is that of Proteasome subunit alpha from Acidimicrobium ferrooxidans (strain DSM 10331 / JCM 15462 / NBRC 103882 / ICP).